Here is a 445-residue protein sequence, read N- to C-terminus: tRNA-2-methylthio-N(6)-dimethylallyladenosine synthase (445 aa).

An MTTase N-terminal domain is found at 3–124 (KKLYIKTYGC…LPELISKVVR (122 aa)). Residues cysteine 12, cysteine 48, cysteine 87, cysteine 162, cysteine 166, and cysteine 169 each contribute to the [4Fe-4S] cluster site. Positions 148 to 380 (YPQGTSAFIS…QQELMAQQLA (233 aa)) constitute a Radical SAM core domain. Residues 383-445 (TSCVGSTMKV…SLNSLTGEIL (63 aa)) enclose the TRAM domain.

Belongs to the methylthiotransferase family. MiaB subfamily. In terms of assembly, monomer. [4Fe-4S] cluster serves as cofactor.

The protein resides in the cytoplasm. The catalysed reaction is N(6)-dimethylallyladenosine(37) in tRNA + (sulfur carrier)-SH + AH2 + 2 S-adenosyl-L-methionine = 2-methylsulfanyl-N(6)-dimethylallyladenosine(37) in tRNA + (sulfur carrier)-H + 5'-deoxyadenosine + L-methionine + A + S-adenosyl-L-homocysteine + 2 H(+). In terms of biological role, catalyzes the methylthiolation of N6-(dimethylallyl)adenosine (i(6)A), leading to the formation of 2-methylthio-N6-(dimethylallyl)adenosine (ms(2)i(6)A) at position 37 in tRNAs that read codons beginning with uridine. The chain is tRNA-2-methylthio-N(6)-dimethylallyladenosine synthase from Rickettsia conorii (strain ATCC VR-613 / Malish 7).